The following is a 158-amino-acid chain: Hypoxanthine DNA glycosylase (158 aa).

Asn39 is a catalytic residue.

Belongs to the uracil-DNA glycosylase (UDG) superfamily. Type 6 (HDG) family.

Functionally, excises hypoxanthine, a deamination product of adenine, from double-stranded DNA. Acts on double-stranded DNA containing G/I, T/I, A/I and C/I base pairs, but not on single-stranded inosine-containing DNA. Also has minor xanthine DNA glycosylase activity. Lacks any detectable uracil-DNA glycosylase activity. The polypeptide is Hypoxanthine DNA glycosylase (Methanosarcina acetivorans (strain ATCC 35395 / DSM 2834 / JCM 12185 / C2A)).